The primary structure comprises 347 residues: Protein FAM50 homolog (347 aa).

A compositionally biased stretch (basic and acidic residues) spans 77 to 113 (EDIVREREKKLAQKKEEKDREKLKALEAKQAEKDRQR). A disordered region spans residues 77–142 (EDIVREREKK…EDEEEPLEIK (66 aa)). Residues 123–138 (PEEDEESFDDEDEEEP) are compositionally biased toward acidic residues.

Belongs to the FAM50 family.

The protein is Protein FAM50 homolog of Aedes aegypti (Yellowfever mosquito).